A 750-amino-acid chain; its full sequence is Sulfhydryl oxidase 1 (750 aa).

An N-terminal signal peptide occupies residues 1 to 32; that stretch reads MRRCGRHSGPPSLLLLLLLLPPLLLSVPGAYA. The Thioredoxin domain occupies 33-159; that stretch reads ARLSVLYSSS…RMRLIDALES (127 aa). Residues Cys73 and Cys76 each act as nucleophile in the active site. Intrachain disulfides connect Cys73/Cys76 and Cys104/Cys113. Residues Asn133 and Asn246 are each glycosylated (N-linked (GlcNAc...) asparagine). Cys396 and Cys408 are joined by a disulfide. Residues 399 to 506 enclose the ERV/ALR sulfhydryl oxidase domain; it reads SEPHFRGFPC…EDPQFPKVQW (108 aa). Residues Arg404, Trp411, His415, Asp454, His458, 481-488, Lys503, and Trp506 contribute to the FAD site; that span reads WTSHNRVN. Cys452 and Cys455 are disulfide-bonded. An intrachain disulfide couples Cys512 to Cys515. Disordered stretches follow at residues 545-567 and 585-632; these read VRDP…ASPN and EQAA…PEHT. Low complexity predominate over residues 587-597; sequence AASAASPGATA. A helical membrane pass occupies residues 710–730; sequence FLDISLCVGLYSVSFMGLLAM.

It belongs to the quiescin-sulfhydryl oxidase (QSOX) family. In terms of assembly, monomer. FAD serves as cofactor. In terms of processing, N-glycosylated. O-glycosylated on Thr and Ser residues. In terms of tissue distribution, isoform 3: Detected in seminal vesicle fluid (at protein level). Isoform 1: Detected in brain, hypophysis, heart, testis and the seminal vesicle. Isoform 3: Highly expressed in the seminal vesicles followed by testis, heart, brain, thymus, hypophysis and lung. Also expressed in prostate, kidney, spleen, liver.

It is found in the golgi apparatus membrane. Its subcellular location is the secreted. It catalyses the reaction 2 R'C(R)SH + O2 = R'C(R)S-S(R)CR' + H2O2. Catalyzes the oxidation of sulfhydryl groups in peptide and protein thiols to disulfides with the reduction of oxygen to hydrogen peroxide. Plays a role in disulfide bond formation in a variety of extracellular proteins. In fibroblasts, required for normal incorporation of laminin into the extracellular matrix, and thereby for normal cell-cell adhesion and cell migration. In Rattus norvegicus (Rat), this protein is Sulfhydryl oxidase 1 (Qsox1).